Here is a 726-residue protein sequence, read N- to C-terminus: MASDNSQTQTRTKKPRKKRKTYSCGVCRKFKTRCDFEPLVGKCHRCNVLRLECSLTKEREEEILAAVESTSKSTLAPASLVSGQLPALAAANPVVANDAVVVAPVAATLSSRLNKLESSVGSLNSKLDLALMLLQGSNSAISNLKNLTSSKAGMGDRNATYDDDDDGDDDGHDHSDSDNFVNGIKLQEPPLKLISDIDERLFPTKAQSQQDILAKTQRPFVVARFNFLKYFNQHEQLCLDLSRDFLVKSHFWIIPGGIKEINRTYVEKHLFITSVFTIIAMGFDENNKYEKEQEQLYPLVERFLTNTLTMFEKLTDHDIEAILYCSMFNISRKSKRHRQLKFNSLVLCNFAVNSVLNIVDFHKIKERVLINEEYSALDLYHLRILNSLTACRLQYSIGSGNFTIQDDMLKEFNNLTAKFPQANFGDDIKISEINLGDIVNGIFLNFKAYFKGFSKRFRAETRGHADRNRDCLVIPELEYWLKNWDELLSKDGGGVLLFAYDFYYSMICRSFLTEFFEEEFQNDVVYFKCALKTMKRYCFSLLDGFLKLPPSLIKGAPTITLHQLVYACLTLCDFLHCFDVAERQQVLNLCTKIYWHLNTIGEKLNEATDNVGKIIKSLIDTSKRKAQVSGRLAVPRNTKRGSPSMTPGFQQSVQSSSALQGSKAGSPQSARSVNSQGSGADSLAAASFNMPDVAQFNSFEDFFQDFFDNLKPTTQSMFSTLQQQQQ.

Positions 24-53 (CGVCRKFKTRCDFEPLVGKCHRCNVLRLEC) form a DNA-binding region, zn(2)-C6 fungal-type. Disordered regions lie at residues 152–183 (AGMGDRNATYDDDDDGDDDGHDHSDSDNFVNG) and 629–681 (SGRL…SGAD). The span at 161–170 (YDDDDDGDDD) shows a compositional bias: acidic residues. Positions 640–679 (RGSPSMTPGFQQSVQSSSALQGSKAGSPQSARSVNSQGSG) are enriched in polar residues.

This sequence belongs to the URC2 family.

The protein resides in the nucleus. Functionally, probable transcriptional activator involved in uracil catabolism. The sequence is that of Uracil catabolism protein 2 (URC2) from Lachancea kluyveri (Yeast).